Reading from the N-terminus, the 348-residue chain is Anthranilate phosphoribosyltransferase (348 aa).

Residues G91, 94-95, T99, 101-104, 119-127, and S131 each bind 5-phospho-alpha-D-ribose 1-diphosphate; these read GD, NIST, and KHGNRSASG. Residue G91 participates in anthranilate binding. S103 serves as a coordination point for Mg(2+). Position 122 (N122) interacts with anthranilate. Residue R177 coordinates anthranilate. 2 residues coordinate Mg(2+): D236 and E237.

It belongs to the anthranilate phosphoribosyltransferase family. In terms of assembly, homodimer. Requires Mg(2+) as cofactor.

It catalyses the reaction N-(5-phospho-beta-D-ribosyl)anthranilate + diphosphate = 5-phospho-alpha-D-ribose 1-diphosphate + anthranilate. The protein operates within amino-acid biosynthesis; L-tryptophan biosynthesis; L-tryptophan from chorismate: step 2/5. Catalyzes the transfer of the phosphoribosyl group of 5-phosphorylribose-1-pyrophosphate (PRPP) to anthranilate to yield N-(5'-phosphoribosyl)-anthranilate (PRA). The polypeptide is Anthranilate phosphoribosyltransferase (Synechococcus sp. (strain ATCC 27144 / PCC 6301 / SAUG 1402/1) (Anacystis nidulans)).